We begin with the raw amino-acid sequence, 666 residues long: UvrABC system protein B (666 aa).

Positions 26-183 (DSFQKGAEKV…RKLLHIQYNR (158 aa)) constitute a Helicase ATP-binding domain. 39 to 46 (GVTGSGKT) serves as a coordination point for ATP. The Beta-hairpin motif lies at 92–115 (YYDYYQPEAYVPSSDTFIEKDSSI). One can recognise a Helicase C-terminal domain in the interval 429–591 (QIEDLLVEIR…ITPLTIRKEV (163 aa)). The UVR domain maps to 625–660 (EVLKDKLREEMMKAAKELDFERAAILRDKMLSIQIN).

The protein belongs to the UvrB family. In terms of assembly, forms a heterotetramer with UvrA during the search for lesions. Interacts with UvrC in an incision complex.

The protein localises to the cytoplasm. Functionally, the UvrABC repair system catalyzes the recognition and processing of DNA lesions. A damage recognition complex composed of 2 UvrA and 2 UvrB subunits scans DNA for abnormalities. Upon binding of the UvrA(2)B(2) complex to a putative damaged site, the DNA wraps around one UvrB monomer. DNA wrap is dependent on ATP binding by UvrB and probably causes local melting of the DNA helix, facilitating insertion of UvrB beta-hairpin between the DNA strands. Then UvrB probes one DNA strand for the presence of a lesion. If a lesion is found the UvrA subunits dissociate and the UvrB-DNA preincision complex is formed. This complex is subsequently bound by UvrC and the second UvrB is released. If no lesion is found, the DNA wraps around the other UvrB subunit that will check the other stand for damage. The protein is UvrABC system protein B of Leptospira borgpetersenii serovar Hardjo-bovis (strain JB197).